We begin with the raw amino-acid sequence, 363 residues long: Mitochondrial phosphate carrier protein 2, mitochondrial (363 aa).

Residues 65 to 85 (AYFAACTVAGMLSCGITHTAI) traverse the membrane as a helical segment. Solcar repeat units follow at residues 65–149 (AYFA…AKKY), 162–246 (YKTL…TVEL), and 263–342 (VQLG…VKVL). Residues 86–123 (TPLDVIKCNMQIDPLKYKNITSAFKTTIKEQGLKGFTR) lie on the Mitochondrial matrix side of the membrane. A helical membrane pass occupies residues 124 to 143 (GWSPTLLGYSAQGAFKYGLY). Residues 144-164 (EYAKKYYSDIVGPEYAAKYKT) are Mitochondrial intermembrane-facing. Residues 165–185 (LIYLAGSASAEIVADVALCPM) form a helical membrane-spanning segment. Topologically, residues 186–220 (EAVKVRVQTQPGFARGLSDGLPKIIKSEGFRGLHK) are mitochondrial matrix. Residues 221–240 (GLVPLWGRQIPYTMMKFATF) form a helical membrane-spanning segment. The Mitochondrial intermembrane segment spans residues 241 to 261 (ENTVELIYKKVMPTPKEECSK). The helical transmembrane segment at 262–282 (PVQLGVSFAGGYIAGIFCAII) threads the bilayer. At 283 to 321 (SHPADNLVSFLNNSKGATVADAVKRLGLWGMLTRGLPLR) the chain is on the mitochondrial matrix side. The chain crosses the membrane as a helical span at residues 322–342 (IFMIGTLTGAQWVIYDAVKVL). At 343-363 (AGLPTTGGASPATALAPSVSA) the chain is on the mitochondrial intermembrane side.

It belongs to the mitochondrial carrier (TC 2.A.29) family. In terms of tissue distribution, expressed in leaves. Strong expression in senescent leaves.

It is found in the mitochondrion inner membrane. Its function is as follows. Transport of phosphate groups from the cytosol to the mitochondrial matrix. Mediates salt stress tolerance through an ATP-dependent pathway and via modulation of the gibberellin metabolism. In Arabidopsis thaliana (Mouse-ear cress), this protein is Mitochondrial phosphate carrier protein 2, mitochondrial (MPT2).